The primary structure comprises 303 residues: Ribosomal RNA small subunit methyltransferase H (303 aa).

S-adenosyl-L-methionine is bound by residues 32–34 (GGH), Asp52, Phe78, Asp99, and Gln106.

This sequence belongs to the methyltransferase superfamily. RsmH family.

Its subcellular location is the cytoplasm. The catalysed reaction is cytidine(1402) in 16S rRNA + S-adenosyl-L-methionine = N(4)-methylcytidine(1402) in 16S rRNA + S-adenosyl-L-homocysteine + H(+). Functionally, specifically methylates the N4 position of cytidine in position 1402 (C1402) of 16S rRNA. The polypeptide is Ribosomal RNA small subunit methyltransferase H (Acinetobacter baylyi (strain ATCC 33305 / BD413 / ADP1)).